We begin with the raw amino-acid sequence, 126 residues long: Hydrogenase maturation factor HypA (126 aa).

His-2 is a binding site for Ni(2+). Zn(2+)-binding residues include Cys-78, Cys-81, Cys-97, and Cys-100.

This sequence belongs to the HypA/HybF family.

Involved in the maturation of [NiFe] hydrogenases. Required for nickel insertion into the metal center of the hydrogenase. This is Hydrogenase maturation factor HypA from Methanococcus maripaludis (strain C7 / ATCC BAA-1331).